A 109-amino-acid chain; its full sequence is Class I hydrophobin 2 (109 aa).

Residues Met1–Ala18 form the signal peptide. Cystine bridges form between Cys30–Cys90, Cys37–Cys84, Cys38–Cys71, and Cys91–Cys104.

Belongs to the fungal hydrophobin family. In terms of assembly, self-assembles to form functional amyloid fibrils called rodlets. Self-assembly into fibrillar rodlets occurs spontaneously at hydrophobic:hydrophilic interfaces and the rodlets further associate laterally to form amphipathic monolayers.

It localises to the secreted. It is found in the cell wall. Aerial growth, conidiation, and dispersal of filamentous fungi in the environment rely upon a capability of their secreting small amphipathic proteins called hydrophobins (HPBs) with low sequence identity. Class I can self-assemble into an outermost layer of rodlet bundles on aerial cell surfaces, conferring cellular hydrophobicity that supports fungal growth, development and dispersal; whereas Class II form highly ordered films at water-air interfaces through intermolecular interactions but contribute nothing to the rodlet structure. Hyd2 is a class I hydrophobin that may allow the dikaryotic mycelia to attach to the hydrophobic surface of the substrate. Higher expression in dikaryotic mycelia than in monokaryotic mycelia indicates that dikaryons require more hyd2 hydrophobin than the monokaryons, presumably for a higher rate of hyphal growth. The protein is Class I hydrophobin 2 of Lentinula edodes (Shiitake mushroom).